The primary structure comprises 238 residues: 2-C-methyl-D-erythritol 4-phosphate cytidylyltransferase (238 aa).

It belongs to the IspD/TarI cytidylyltransferase family. IspD subfamily.

It catalyses the reaction 2-C-methyl-D-erythritol 4-phosphate + CTP + H(+) = 4-CDP-2-C-methyl-D-erythritol + diphosphate. It functions in the pathway isoprenoid biosynthesis; isopentenyl diphosphate biosynthesis via DXP pathway; isopentenyl diphosphate from 1-deoxy-D-xylulose 5-phosphate: step 2/6. In terms of biological role, catalyzes the formation of 4-diphosphocytidyl-2-C-methyl-D-erythritol from CTP and 2-C-methyl-D-erythritol 4-phosphate (MEP). The chain is 2-C-methyl-D-erythritol 4-phosphate cytidylyltransferase from Salinibacter ruber (strain DSM 13855 / M31).